The primary structure comprises 137 residues: 6,7-dimethyl-8-ribityllumazine synthase (137 aa).

5-amino-6-(D-ribitylamino)uracil contacts are provided by residues F11, 43–45 (SFD), and 67–69 (CVI). Residue 72 to 73 (DT) participates in (2S)-2-hydroxy-3-oxobutyl phosphate binding. H75 acts as the Proton donor in catalysis. L100 contacts 5-amino-6-(D-ribitylamino)uracil. R115 is a binding site for (2S)-2-hydroxy-3-oxobutyl phosphate.

Belongs to the DMRL synthase family. As to quaternary structure, forms an icosahedral capsid composed of 60 subunits, arranged as a dodecamer of pentamers.

It carries out the reaction (2S)-2-hydroxy-3-oxobutyl phosphate + 5-amino-6-(D-ribitylamino)uracil = 6,7-dimethyl-8-(1-D-ribityl)lumazine + phosphate + 2 H2O + H(+). It participates in cofactor biosynthesis; riboflavin biosynthesis; riboflavin from 2-hydroxy-3-oxobutyl phosphate and 5-amino-6-(D-ribitylamino)uracil: step 1/2. Functionally, catalyzes the formation of 6,7-dimethyl-8-ribityllumazine by condensation of 5-amino-6-(D-ribitylamino)uracil with 3,4-dihydroxy-2-butanone 4-phosphate. This is the penultimate step in the biosynthesis of riboflavin. The protein is 6,7-dimethyl-8-ribityllumazine synthase of Methanococcus maripaludis (strain C6 / ATCC BAA-1332).